The following is a 199-amino-acid chain: CASP-like protein 1B2 (199 aa).

Topologically, residues 1–22 (MALQSEEKLEVGYSSLQPKTRK) are cytoplasmic. Residues 23 to 43 (WVLLMLRVLAFFATAAATVVM) traverse the membrane as a helical segment. Over 44 to 74 (GLNKETKTLVVATVGSTPIKASLAAKFQHTP) the chain is Extracellular. The helical transmembrane segment at 75 to 95 (AFVFFVIANGLASIHNLVMIM) threads the bilayer. Over 96–112 (GDLFGQKLDYKGLRLAM) the chain is Cytoplasmic. The helical transmembrane segment at 113–133 (IAILDMMTVALVSGGVSAAAF) threads the bilayer. Residues 134-163 (MAELGKNGNSHARWNKICDKFETFCDHGGG) are Extracellular-facing. The chain crosses the membrane as a helical span at residues 164 to 184 (ALIASFAGLILMLIISVMSII). Over 185 to 199 (KLLIKPKPDSTIVVP) the chain is Cytoplasmic.

It belongs to the Casparian strip membrane proteins (CASP) family. As to quaternary structure, homodimer and heterodimers.

It is found in the cell membrane. The sequence is that of CASP-like protein 1B2 from Populus trichocarpa (Western balsam poplar).